Consider the following 197-residue polypeptide: Small ribosomal subunit protein uS4B (197 aa).

The region spanning 88-150 (SRLDNMVYRM…SRKTEMFVNN (63 aa)) is the S4 RNA-binding domain.

This sequence belongs to the universal ribosomal protein uS4 family. In terms of assembly, part of the 30S ribosomal subunit. Contacts protein S5. The interaction surface between S4 and S5 is involved in control of translational fidelity.

Functionally, one of the primary rRNA binding proteins, it binds directly to 16S rRNA where it nucleates assembly of the body of the 30S subunit. With S5 and S12 plays an important role in translational accuracy. The protein is Small ribosomal subunit protein uS4B of Clostridium perfringens (strain ATCC 13124 / DSM 756 / JCM 1290 / NCIMB 6125 / NCTC 8237 / Type A).